The following is a 122-amino-acid chain: Serum amyloid A-2 protein (122 aa).

Positions Met1 to Gly19 are cleaved as a signal peptide. Residues Arg89–Lys108 show a composition bias toward basic and acidic residues. Positions Arg89 to Tyr122 are disordered.

Belongs to the SAA family. As to quaternary structure, apolipoprotein of the HDL complex. Expressed by the liver; secreted in plasma.

The protein localises to the secreted. Major acute phase reactant. This chain is Serum amyloid A-2 protein, found in Mus musculus (Mouse).